A 626-amino-acid polypeptide reads, in one-letter code: Elongation factor 4 (626 aa).

The region spanning 14-195 is the tr-type G domain; the sequence is SVIRNFCIIA…QIVMDVPAPH (182 aa). GTP is bound by residues 26–31 and 142–145; these read DHGKST and NKID. Residues 603–626 are disordered; sequence LSTGEDSNDRDTKDKIRAAQKTEG. A compositionally biased stretch (basic and acidic residues) spans 609 to 626; the sequence is SNDRDTKDKIRAAQKTEG.

It belongs to the TRAFAC class translation factor GTPase superfamily. Classic translation factor GTPase family. LepA subfamily.

The protein localises to the cell membrane. It carries out the reaction GTP + H2O = GDP + phosphate + H(+). Its function is as follows. Required for accurate and efficient protein synthesis under certain stress conditions. May act as a fidelity factor of the translation reaction, by catalyzing a one-codon backward translocation of tRNAs on improperly translocated ribosomes. Back-translocation proceeds from a post-translocation (POST) complex to a pre-translocation (PRE) complex, thus giving elongation factor G a second chance to translocate the tRNAs correctly. Binds to ribosomes in a GTP-dependent manner. This is Elongation factor 4 from Bifidobacterium longum (strain DJO10A).